The primary structure comprises 383 residues: ATP phosphoribosyltransferase regulatory subunit (383 aa).

This sequence belongs to the class-II aminoacyl-tRNA synthetase family. HisZ subfamily. In terms of assembly, heteromultimer composed of HisG and HisZ subunits.

Its subcellular location is the cytoplasm. The protein operates within amino-acid biosynthesis; L-histidine biosynthesis; L-histidine from 5-phospho-alpha-D-ribose 1-diphosphate: step 1/9. Its function is as follows. Required for the first step of histidine biosynthesis. May allow the feedback regulation of ATP phosphoribosyltransferase activity by histidine. This chain is ATP phosphoribosyltransferase regulatory subunit, found in Neisseria gonorrhoeae (strain NCCP11945).